Reading from the N-terminus, the 329-residue chain is DNA repair and recombination protein RadA (329 aa).

ATP is bound at residue 107–114 (GEFGSGKS).

Belongs to the eukaryotic RecA-like protein family.

Functionally, involved in DNA repair and in homologous recombination. Binds and assemble on single-stranded DNA to form a nucleoprotein filament. Hydrolyzes ATP in a ssDNA-dependent manner and promotes DNA strand exchange between homologous DNA molecules. This chain is DNA repair and recombination protein RadA, found in Methanocorpusculum labreanum (strain ATCC 43576 / DSM 4855 / Z).